The following is a 184-amino-acid chain: Inosine triphosphate pyrophosphatase (184 aa).

ITP is bound at residue 9–14; that stretch reads TSNASK. E38 provides a ligand contact to Mg(2+). Residues K50, 66–67, K83, 142–145, K163, and 168–169 each bind ITP; these read DT, FGWD, and HR.

Belongs to the HAM1 NTPase family. Homodimer. Mg(2+) serves as cofactor. The cofactor is Mn(2+).

The protein resides in the cytoplasm. The protein localises to the nucleus. The catalysed reaction is ITP + H2O = IMP + diphosphate + H(+). It catalyses the reaction dITP + H2O = dIMP + diphosphate + H(+). The enzyme catalyses XTP + H2O = XMP + diphosphate + H(+). In terms of biological role, pyrophosphatase that hydrolyzes non-canonical purine nucleotides such as inosine triphosphate (ITP), deoxyinosine triphosphate (dITP) or xanthosine 5'-triphosphate (XTP) to their respective monophosphate derivatives. The enzyme does not distinguish between the deoxy- and ribose forms. Probably excludes non-canonical purines from RNA and DNA precursor pools, thus preventing their incorporation into RNA and DNA and avoiding chromosomal lesions. The protein is Inosine triphosphate pyrophosphatase of Tuber melanosporum (strain Mel28) (Perigord black truffle).